Reading from the N-terminus, the 66-residue chain is Cocaine- and amphetamine-regulated transcript protein (66 aa).

2 disulfide bridges follow: C34–C52 and C40–C60.

This sequence belongs to the CART family.

The protein localises to the secreted. Its function is as follows. Satiety factor closely associated with the actions of leptin and neuropeptide y; this anorectic peptide inhibits both normal and starvation-induced feeding and completely blocks the feeding response induced by neuropeptide Y and regulated by leptin in the hypothalamus. This Sus scrofa (Pig) protein is Cocaine- and amphetamine-regulated transcript protein (CARTPT).